A 266-amino-acid polypeptide reads, in one-letter code: Cytochrome c oxidase subunit 2 (266 aa).

At methionine 1–methionine 43 the chain is on the mitochondrial intermembrane side. The helical transmembrane segment at phenylalanine 44–phenylalanine 64 threads the bilayer. The Mitochondrial matrix portion of the chain corresponds to aspartate 65–glutamate 82. The helical transmembrane segment at isoleucine 83–leucine 103 threads the bilayer. Residues leucine 104–isoleucine 266 lie on the Mitochondrial intermembrane side of the membrane. Cu cation-binding residues include histidine 186, cysteine 221, glutamate 223, cysteine 225, histidine 229, and methionine 232. Glutamate 223 serves as a coordination point for Mg(2+).

The protein belongs to the cytochrome c oxidase subunit 2 family. As to quaternary structure, component of the cytochrome c oxidase (complex IV, CIV), a multisubunit enzyme composed of a catalytic core of 3 subunits and several supernumerary subunits. The complex exists as a monomer or a dimer and forms supercomplexes (SCs) in the inner mitochondrial membrane with ubiquinol-cytochrome c oxidoreductase (cytochrome b-c1 complex, complex III, CIII). It depends on Cu cation as a cofactor.

The protein localises to the mitochondrion inner membrane. It catalyses the reaction 4 Fe(II)-[cytochrome c] + O2 + 8 H(+)(in) = 4 Fe(III)-[cytochrome c] + 2 H2O + 4 H(+)(out). Component of the cytochrome c oxidase, the last enzyme in the mitochondrial electron transport chain which drives oxidative phosphorylation. The respiratory chain contains 3 multisubunit complexes succinate dehydrogenase (complex II, CII), ubiquinol-cytochrome c oxidoreductase (cytochrome b-c1 complex, complex III, CIII) and cytochrome c oxidase (complex IV, CIV), that cooperate to transfer electrons derived from NADH and succinate to molecular oxygen, creating an electrochemical gradient over the inner membrane that drives transmembrane transport and the ATP synthase. Cytochrome c oxidase is the component of the respiratory chain that catalyzes the reduction of oxygen to water. Electrons originating from reduced cytochrome c in the intermembrane space (IMS) are transferred via the dinuclear copper A center (CU(A)) of subunit 2 and heme A of subunit 1 to the active site in subunit 1, a binuclear center (BNC) formed by heme A3 and copper B (CU(B)). The BNC reduces molecular oxygen to 2 water molecules using 4 electrons from cytochrome c in the IMS and 4 protons from the mitochondrial matrix. This Phytophthora megasperma (Potato pink rot fungus) protein is Cytochrome c oxidase subunit 2 (COX2).